We begin with the raw amino-acid sequence, 245 residues long: Putative transport permease YvfS (245 aa).

6 helical membrane passes run 20–40 (YFVL…TNVV), 53–73 (HYLM…TLGI), 103–123 (IGQS…GAII), 137–157 (GLWI…IGLM), 164–184 (AGIS…WMPF), and 214–234 (GSPT…FMLL). One can recognise an ABC transmembrane type-2 domain in the interval 20-242 (YFVLWSLIMP…LLSKYIRRKQ (223 aa)).

The protein belongs to the ABC-2 integral membrane protein family.

Its subcellular location is the cell membrane. This is Putative transport permease YvfS (yvfS) from Bacillus subtilis (strain 168).